Here is a 425-residue protein sequence, read N- to C-terminus: Enolase (425 aa).

Glutamine 163 contacts (2R)-2-phosphoglycerate. Glutamate 205 functions as the Proton donor in the catalytic mechanism. Mg(2+) is bound by residues aspartate 242, glutamate 285, and aspartate 312. Lysine 337, arginine 366, serine 367, and lysine 388 together coordinate (2R)-2-phosphoglycerate. Catalysis depends on lysine 337, which acts as the Proton acceptor.

Belongs to the enolase family. Mg(2+) is required as a cofactor.

Its subcellular location is the cytoplasm. It is found in the secreted. The protein localises to the cell surface. The enzyme catalyses (2R)-2-phosphoglycerate = phosphoenolpyruvate + H2O. The protein operates within carbohydrate degradation; glycolysis; pyruvate from D-glyceraldehyde 3-phosphate: step 4/5. Functionally, catalyzes the reversible conversion of 2-phosphoglycerate (2-PG) into phosphoenolpyruvate (PEP). It is essential for the degradation of carbohydrates via glycolysis. The chain is Enolase from Acidiphilium cryptum (strain JF-5).